Reading from the N-terminus, the 468-residue chain is DNA polymerase IV 1 (468 aa).

A UmuC domain is found at 6–188 (VLHLDMDAFF…LPVRRLWGIG (183 aa)). Aspartate 10 and aspartate 105 together coordinate Mg(2+). Glutamate 106 is a catalytic residue.

The protein belongs to the DNA polymerase type-Y family. In terms of assembly, monomer. Mg(2+) serves as cofactor.

It is found in the cytoplasm. It carries out the reaction DNA(n) + a 2'-deoxyribonucleoside 5'-triphosphate = DNA(n+1) + diphosphate. In terms of biological role, poorly processive, error-prone DNA polymerase involved in untargeted mutagenesis. Copies undamaged DNA at stalled replication forks, which arise in vivo from mismatched or misaligned primer ends. These misaligned primers can be extended by PolIV. Exhibits no 3'-5' exonuclease (proofreading) activity. May be involved in translesional synthesis, in conjunction with the beta clamp from PolIII. The chain is DNA polymerase IV 1 (dinB1) from Mycobacterium tuberculosis (strain CDC 1551 / Oshkosh).